The primary structure comprises 105 residues: Anti-sigma factor RsrA (105 aa).

Zn(2+) contacts are provided by Cys-11, His-37, Cys-41, and Cys-44. A disulfide bridge links Cys-11 with Cys-44. The contributes to redox-sensitivity stretch occupies residues Lys-33–Lys-47. Residues Gln-86–Ser-105 are disordered. Over residues Ala-94–Ser-105 the composition is skewed to low complexity.

The protein belongs to the zinc-associated anti-sigma factor (ZAS) superfamily. In terms of assembly, interacts with cognate sigma factor SigR under reducing but not oxiding conditions. Treatment with the thiol-oxidzing agent diamide inhibits the interaction, while incubation with thioredoxin (trxA) stimulates the interaction. Zn(2+) is required as a cofactor. In terms of processing, under oxidizing conditions up to 3 disulfide bonds are formed. A single disulfide bond inhibits binding to SigR. Cys-11 forms a disulfide bond with either Cys-44 (the major bind) or Cys-41 (a minor bond).

In terms of biological role, a redox-regulated anti-sigma factor for extracytoplasmic function (ECF) sigma factor SigR, and a key sensor of disulfide stress. Holds SigR, its cognate ECF sigma factor, in an inactive form, inhibiting its sigma activity under reducing but not oxidizing conditions; oxidation and reduction of the anti-sigma factor is reversible. Mycothiol (MSH) is competent for reduction of RsrA, allowing it to bind to SigR. In conjunction with its cognate sigma factor SigR may sense the intracellular level of reduced MSH. Probably releases SigR during oxidative stress. The protein is Anti-sigma factor RsrA (rsrA) of Streptomyces coelicolor (strain ATCC BAA-471 / A3(2) / M145).